Here is a 355-residue protein sequence, read N- to C-terminus: Guanine nucleotide-binding protein G(i) subunit alpha-2 (355 aa).

Residue Gly2 is the site of N-myristoyl glycine attachment. A lipid anchor (S-palmitoyl cysteine) is attached at Cys3. A G-alpha domain is found at 32–355; that stretch reads REVKLLLLGA…KNNLKDCGLF (324 aa). Residues 35–48 form a G1 motif region; it reads KLLLLGAGESGKST. Residues 40–47, 176–182, 201–205, 270–273, and Ala327 each bind GTP; these read GAGESGKS, LRTRVKT, DVGGQ, and NKKD. Ser47 and Thr182 together coordinate Mg(2+). The segment at 174 to 182 is G2 motif; it reads DVLRTRVKT. Residues 197 to 206 are G3 motif; that stretch reads FKMFDVGGQR. The tract at residues 266 to 273 is G4 motif; that stretch reads ILFLNKKD. The tract at residues 325–330 is G5 motif; the sequence is TCATDT.

The protein belongs to the G-alpha family. G(i/o/t/z) subfamily. As to quaternary structure, g proteins are composed of 3 units; alpha, beta and gamma. The alpha chain contains the guanine nucleotide binding site. In this context, interacts with GNB2. Interacts with UNC5B. Interacts with GPSM1. Interacts with RGS12 and RGS14. Interacts (inactive GDP-bound form) with NUCB1 (via GBA motif); the interaction leads to activation of GNAI3. Interacts (inactive GDP-bound form) with CCDC88C/DAPLE (via GBA motif). Interacts (inactive GDP-bound form) with CCDC8A/GIV (via GBA motif).

The protein localises to the cytoplasm. It localises to the cell membrane. The protein resides in the cytoskeleton. Its subcellular location is the microtubule organizing center. It is found in the centrosome. The protein localises to the membrane. Guanine nucleotide-binding proteins (G proteins) are involved as modulators or transducers in various transmembrane signaling systems. The G(i) proteins are involved in hormonal regulation of adenylate cyclase: they inhibit the cyclase in response to beta-adrenergic stimuli. May play a role in cell division. The polypeptide is Guanine nucleotide-binding protein G(i) subunit alpha-2 (Gnai2) (Rattus norvegicus (Rat)).